The chain runs to 266 residues: Nitrate import ATP-binding protein NrtD (266 aa).

The ABC transporter domain occupies 3–234 (LEITDLNRVF…DEETPKNRTY (232 aa)). Residue 39-46 (GASGSGKS) coordinates ATP.

Belongs to the ABC transporter superfamily. Nitrate/nitrite/cyanate uptake transporter (NitT) (TC 3.A.1.16) family. In terms of assembly, the complex is composed of two ATP-binding proteins (NrtC and NrtD), two transmembrane proteins (NrtB) and a solute-binding protein (NrtA).

Its subcellular location is the cell inner membrane. It catalyses the reaction nitrate(out) + ATP + H2O = nitrate(in) + ADP + phosphate + H(+). Functionally, part of the ABC transporter complex NrtABCD involved in nitrate uptake. The complex is probably also involved in nitrite transport. Probably responsible for energy coupling to the transport system. This is Nitrate import ATP-binding protein NrtD (nrtD) from Synechocystis sp. (strain ATCC 27184 / PCC 6803 / Kazusa).